The sequence spans 1889 residues: E3 ubiquitin-protein ligase UBR3 (1889 aa).

The disordered stretch occupies residues 1–27 (MAAAAAAAAVGDPQPPQPEAPAQGLAL). The segment at 118-189 (ALCGLVWTAN…ESGFCRRHQI (72 aa)) adopts a UBR-type zinc-finger fold. The interval 338–362 (LGQIDSSDEEDQDGSQGLGKRKRVK) is disordered. Phosphoserine is present on residues Ser-343 and Ser-344. A run of 2 helical transmembrane segments spans residues 761–781 (MLEG…HLGM) and 919–939 (LLHC…ILMD). Residues 1167 to 1199 (KKITAAEKKTLDKEERRQKARERQQKLLAEFAS) are a coiled coil. Ser-1199 is subject to Phosphoserine. Residues 1306-1364 (DSSCLLAVSIGWEGGVYVQTCGHTLHIDCHKSYMESLRNDQVLQGFSVDKGEFTCPLCR) form an RING-type; degenerate zinc finger. A helical transmembrane segment spans residues 1807–1827 (QNCGAGTGIFLLINASVIIII).

It belongs to the E3 ubiquitin-protein ligase UBR1-like family. As to quaternary structure, interacts with UBE2A and UBE2B. As to expression, expressed in numerous cells of the smell, touch, vision, hearing and taste senses. Expressed in cells of the olfactory pathway, including the olfactory cell layer of the main olfactory epithelium (MOE), a mitral neuron cell layer of the olfactory bulb (OB), and a pyramidal cell layer of the piriform cortex of the olfactory cortex (OC). Expressed in the vomeronasal sensory epithelium of the vomeronasal organ (VNO) and the mitral cells of the accessory olfactory bulb. Expressed in tactile tissues, including the dorsal root ganglion, trigeminal ganglion and follicle-sinus complexes. Expressed in cells between hair follicle and sinus and also in the region of the rete ridge collar. Expressed in taste buds of the fungiform, circumvallate, and foliate papillae. Expressed in the spiral ganglion, the organ of Corti of the cochlea in the inner ear, in the sensory epithelium of macula and vestibular ganglion of the balancing system (at protein level). Expressed in the liver and skeletal muscle.

Its subcellular location is the membrane. It carries out the reaction S-ubiquitinyl-[E2 ubiquitin-conjugating enzyme]-L-cysteine + [acceptor protein]-L-lysine = [E2 ubiquitin-conjugating enzyme]-L-cysteine + N(6)-ubiquitinyl-[acceptor protein]-L-lysine.. Its pathway is protein modification; protein ubiquitination. E3 ubiquitin-protein ligase which is a component of the N-end rule pathway. Does not bind to proteins bearing specific N-terminal residues that are destabilizing according to the N-end rule, leading to their ubiquitination and subsequent degradation. May play a role in Shh signaling by mediating the ubiquitination of Kif7. May be important for MYH9 function in certain tissues, possibly by regulating the ubiquitination of MYH9 and consequently affecting its interaction with MYO7A. The chain is E3 ubiquitin-protein ligase UBR3 (Ubr3) from Mus musculus (Mouse).